Reading from the N-terminus, the 235-residue chain is Cytochrome c oxidase subunit 2 (235 aa).

Residues 1 to 14 lie on the Mitochondrial intermembrane side of the membrane; sequence MPYPMQLGFQDATS. Residues 15-45 form a helical membrane-spanning segment; that stretch reads PIMEELMYFHDHTLMIVFLISSLVLYIIILM. Over 46–59 the chain is Mitochondrial matrix; the sequence is LTTKLTHTSTMDAQ. A helical transmembrane segment spans residues 60-87; sequence EVETIWTILPAVILILIALPSLRILYMM. At 88 to 235 the chain is on the mitochondrial intermembrane side; sequence DEIYNPYLTV…MQSFLSYLYI (148 aa). Residues histidine 161, cysteine 196, glutamate 198, cysteine 200, histidine 204, and methionine 207 each coordinate Cu cation. Glutamate 198 contributes to the Mg(2+) binding site. Residue tyrosine 218 is modified to Phosphotyrosine.

The protein belongs to the cytochrome c oxidase subunit 2 family. As to quaternary structure, component of the cytochrome c oxidase (complex IV, CIV), a multisubunit enzyme composed of 14 subunits. The complex is composed of a catalytic core of 3 subunits MT-CO1, MT-CO2 and MT-CO3, encoded in the mitochondrial DNA, and 11 supernumerary subunits COX4I, COX5A, COX5B, COX6A, COX6B, COX6C, COX7A, COX7B, COX7C, COX8 and NDUFA4, which are encoded in the nuclear genome. The complex exists as a monomer or a dimer and forms supercomplexes (SCs) in the inner mitochondrial membrane with NADH-ubiquinone oxidoreductase (complex I, CI) and ubiquinol-cytochrome c oxidoreductase (cytochrome b-c1 complex, complex III, CIII), resulting in different assemblies (supercomplex SCI(1)III(2)IV(1) and megacomplex MCI(2)III(2)IV(2)). Found in a complex with TMEM177, COA6, COX18, COX20, SCO1 and SCO2. Interacts with TMEM177 in a COX20-dependent manner. Interacts with COX20. Interacts with COX16. It depends on Cu cation as a cofactor.

The protein localises to the mitochondrion inner membrane. It carries out the reaction 4 Fe(II)-[cytochrome c] + O2 + 8 H(+)(in) = 4 Fe(III)-[cytochrome c] + 2 H2O + 4 H(+)(out). Functionally, component of the cytochrome c oxidase, the last enzyme in the mitochondrial electron transport chain which drives oxidative phosphorylation. The respiratory chain contains 3 multisubunit complexes succinate dehydrogenase (complex II, CII), ubiquinol-cytochrome c oxidoreductase (cytochrome b-c1 complex, complex III, CIII) and cytochrome c oxidase (complex IV, CIV), that cooperate to transfer electrons derived from NADH and succinate to molecular oxygen, creating an electrochemical gradient over the inner membrane that drives transmembrane transport and the ATP synthase. Cytochrome c oxidase is the component of the respiratory chain that catalyzes the reduction of oxygen to water. Electrons originating from reduced cytochrome c in the intermembrane space (IMS) are transferred via the dinuclear copper A center (CU(A)) of subunit 2 and heme A of subunit 1 to the active site in subunit 1, a binuclear center (BNC) formed by heme A3 and copper B (CU(B)). The BNC reduces molecular oxygen to 2 water molecules using 4 electrons from cytochrome c in the IMS and 4 protons from the mitochondrial matrix. The sequence is that of Cytochrome c oxidase subunit 2 (MT-CO2) from Didelphis virginiana (North American opossum).